Here is a 640-residue protein sequence, read N- to C-terminus: Pro-neuregulin-1, membrane-bound isoform (640 aa).

Positions 1–19 are excised as a propeptide; that stretch reads MSERKEGRGKGKGKKKERG. Positions 1-53 are disordered; that stretch reads MSERKEGRGKGKGKKKERGSGKKPESAAGSQSPALPPRLKEMKSQESAAGSKL. The Extracellular portion of the chain corresponds to 20 to 242; that stretch reads SGKKPESAAG…EKAEELYQKR (223 aa). Positions 37-128 constitute an Ig-like C2-type domain; the sequence is PRLKEMKSQE…GNDSASANIT (92 aa). Residues Cys-57 and Cys-112 are joined by a disulfide bond. N-linked (GlcNAc...) asparagine glycosylation is found at Asn-120, Asn-126, and Asn-164. The EGF-like domain occupies 178-222; the sequence is HLVKCAEKEKTFCVNGGECFMVKDLSNPSRYLCKCQPGFTGARCT. Cystine bridges form between Cys-182-Cys-196, Cys-190-Cys-210, and Cys-212-Cys-221. Residues 243–265 traverse the membrane as a helical segment; it reads VLTITGICIALLVVGIMCVVAYC. Topologically, residues 266–640 are cytoplasmic; sequence KTKKQRKKLH…VIANQDPIAV (375 aa). Positions 334–350 are enriched in low complexity; that stretch reads TSHYTSTAHHSTTVTQT. Disordered regions lie at residues 334 to 360, 375 to 399, 433 to 461, and 524 to 588; these read TSHYTSTAHHSTTVTQTPSHSWSNGHT, SVENSRHSSPTGGPRGRLNGTGGPR, RMSPVDFHTPSSPKSPPSEMSPPVSSMTV, and EYET…DTPF. A compositionally biased stretch (polar residues) spans 351 to 360; that stretch reads PSHSWSNGHT. A compositionally biased stretch (gly residues) spans 387 to 397; sequence GPRGRLNGTGG. Residues 542-552 show a composition bias toward basic residues; the sequence is ANSRRAKRTKP. Residues 563–574 are compositionally biased toward low complexity; the sequence is DSNTSSQSSNSE.

This sequence belongs to the neuregulin family. In terms of assembly, the cytoplasmic domain interacts with the LIM domain region of LIMK1. Forms a ternary complex with ERBB3 and ITGAV:ITGB3 or ITGA6:ITGB4. Interacts with NRDC and BACE1. Post-translationally, proteolytic cleavage close to the plasma membrane on the external face leads to the release of the soluble growth factor form. N- and O-glycosylated. Extensive glycosylation precedes the proteolytic cleavage. In terms of tissue distribution, type I isoforms are the predominant forms expressed in the endocardium. Isoform alpha is expressed in breast, ovary, testis, prostate, heart, skeletal muscle, lung, placenta liver, kidney, salivary gland, small intestine and brain, but not in uterus, stomach, pancreas, and spleen. Isoform 3 is the predominant form in mesenchymal cells and in non-neuronal organs, whereas isoform 6 is the major neuronal form. Isoform 8 is expressed in spinal cord and brain. Isoform 9 is the major form in skeletal muscle cells; in the nervous system it is expressed in spinal cord and brain. Also detected in adult heart, placenta, lung, liver, kidney, and pancreas. Isoform 10 is expressed in nervous system: spinal cord motor neurons, dorsal root ganglion neurons, and brain. Predominant isoform expressed in sensory and motor neurons. Not detected in adult heart, placenta, lung, liver, skeletal muscle, kidney, and pancreas. Not expressed in fetal lung, liver and kidney. Type IV isoforms are brain-specific.

The protein resides in the cell membrane. It localises to the secreted. The protein localises to the nucleus. Its subcellular location is the membrane. Direct ligand for ERBB3 and ERBB4 tyrosine kinase receptors. Concomitantly recruits ERBB1 and ERBB2 coreceptors, resulting in ligand-stimulated tyrosine phosphorylation and activation of the ERBB receptors. The multiple isoforms perform diverse functions such as inducing growth and differentiation of epithelial, glial, neuronal, and skeletal muscle cells; inducing expression of acetylcholine receptor in synaptic vesicles during the formation of the neuromuscular junction; stimulating lobuloalveolar budding and milk production in the mammary gland and inducing differentiation of mammary tumor cells; stimulating Schwann cell proliferation; implication in the development of the myocardium such as trabeculation of the developing heart. Isoform 10 may play a role in motor and sensory neuron development. Binds to ERBB4. Binds to ERBB3. Acts as a ligand for integrins and binds (via EGF domain) to integrins ITGAV:ITGB3 or ITGA6:ITGB4. Its binding to integrins and subsequent ternary complex formation with integrins and ERRB3 are essential for NRG1-ERBB signaling. Induces the phosphorylation and activation of MAPK3/ERK1, MAPK1/ERK2 and AKT1. Ligand-dependent ERBB4 endocytosis is essential for the NRG1-mediated activation of these kinases in neurons. This Homo sapiens (Human) protein is Pro-neuregulin-1, membrane-bound isoform (NRG1).